A 236-amino-acid chain; its full sequence is Small ribosomal subunit protein uS5 (236 aa).

In terms of domain architecture, S5 DRBM spans 61–124; it reads ENQEILDIAL…NYAKLNIIEI (64 aa).

The protein belongs to the universal ribosomal protein uS5 family. As to quaternary structure, part of the 30S ribosomal subunit. Contacts protein S4.

In terms of biological role, with S4 and S12 plays an important role in translational accuracy. This chain is Small ribosomal subunit protein uS5, found in Pyrococcus abyssi (strain GE5 / Orsay).